The chain runs to 274 residues: Formamidopyrimidine-DNA glycosylase (274 aa).

The Schiff-base intermediate with DNA role is filled by Pro2. Glu3 functions as the Proton donor in the catalytic mechanism. Lys58 (proton donor; for beta-elimination activity) is an active-site residue. Residues His91, Arg110, and Lys152 each contribute to the DNA site. The FPG-type zinc finger occupies 237 to 271 (KVYGRKNLPCLVCENKIETVVIAGRHSAFCPHCQP). Residue Arg261 is the Proton donor; for delta-elimination activity of the active site.

This sequence belongs to the FPG family. Monomer. Zn(2+) serves as cofactor.

The enzyme catalyses Hydrolysis of DNA containing ring-opened 7-methylguanine residues, releasing 2,6-diamino-4-hydroxy-5-(N-methyl)formamidopyrimidine.. It carries out the reaction 2'-deoxyribonucleotide-(2'-deoxyribose 5'-phosphate)-2'-deoxyribonucleotide-DNA = a 3'-end 2'-deoxyribonucleotide-(2,3-dehydro-2,3-deoxyribose 5'-phosphate)-DNA + a 5'-end 5'-phospho-2'-deoxyribonucleoside-DNA + H(+). Functionally, involved in base excision repair of DNA damaged by oxidation or by mutagenic agents. Acts as a DNA glycosylase that recognizes and removes damaged bases. Has a preference for oxidized purines, such as 7,8-dihydro-8-oxoguanine (8-oxoG). Has AP (apurinic/apyrimidinic) lyase activity and introduces nicks in the DNA strand. Cleaves the DNA backbone by beta-delta elimination to generate a single-strand break at the site of the removed base with both 3'- and 5'-phosphates. This is Formamidopyrimidine-DNA glycosylase from Legionella pneumophila subsp. pneumophila (strain Philadelphia 1 / ATCC 33152 / DSM 7513).